Here is a 291-residue protein sequence, read N- to C-terminus: Protease HtpX homolog (291 aa).

A run of 2 helical transmembrane segments spans residues 4–24 (VFLF…SARL) and 38–58 (MGML…ISLL). His-144 is a Zn(2+) binding site. The active site involves Glu-145. His-148 contributes to the Zn(2+) binding site. The next 2 membrane-spanning stretches (helical) occupy residues 159–179 (LIQG…AYAL) and 199–219 (ISSI…VMYF). Position 224 (Glu-224) interacts with Zn(2+).

The protein belongs to the peptidase M48B family. Requires Zn(2+) as cofactor.

It localises to the cell inner membrane. The chain is Protease HtpX homolog from Chlorobium phaeovibrioides (strain DSM 265 / 1930) (Prosthecochloris vibrioformis (strain DSM 265)).